We begin with the raw amino-acid sequence, 394 residues long: LL-diaminopimelate aminotransferase (394 aa).

Residues Y14 and G41 each coordinate substrate. Pyridoxal 5'-phosphate-binding positions include Y71, 104 to 105 (AK), Y128, N174, Y205, and 233 to 235 (SFS). Substrate-binding residues include K105, Y128, and N174. K236 bears the N6-(pyridoxal phosphate)lysine mark. Positions 244 and 275 each coordinate pyridoxal 5'-phosphate. Residues N275 and R369 each coordinate substrate.

It belongs to the class-I pyridoxal-phosphate-dependent aminotransferase family. LL-diaminopimelate aminotransferase subfamily. Homodimer. Pyridoxal 5'-phosphate is required as a cofactor.

It catalyses the reaction (2S,6S)-2,6-diaminopimelate + 2-oxoglutarate = (S)-2,3,4,5-tetrahydrodipicolinate + L-glutamate + H2O + H(+). The protein operates within amino-acid biosynthesis; L-lysine biosynthesis via DAP pathway; LL-2,6-diaminopimelate from (S)-tetrahydrodipicolinate (aminotransferase route): step 1/1. Its function is as follows. Involved in the synthesis of meso-diaminopimelate (m-DAP or DL-DAP), required for both lysine and peptidoglycan biosynthesis. Catalyzes the direct conversion of tetrahydrodipicolinate to LL-diaminopimelate. Is also able to use meso-diaminopimelate, cystathionine, lysine or ornithine as substrates. This is LL-diaminopimelate aminotransferase from Chlamydia trachomatis serovar D (strain ATCC VR-885 / DSM 19411 / UW-3/Cx).